The chain runs to 479 residues: ATP-dependent protease ATPase subunit HslU (479 aa).

ATP-binding positions include Ile-32, 74–79 (GVGKTE), Asp-290, Glu-355, and Arg-427.

It belongs to the ClpX chaperone family. HslU subfamily. A double ring-shaped homohexamer of HslV is capped on each side by a ring-shaped HslU homohexamer. The assembly of the HslU/HslV complex is dependent on binding of ATP.

It localises to the cytoplasm. Its function is as follows. ATPase subunit of a proteasome-like degradation complex; this subunit has chaperone activity. The binding of ATP and its subsequent hydrolysis by HslU are essential for unfolding of protein substrates subsequently hydrolyzed by HslV. HslU recognizes the N-terminal part of its protein substrates and unfolds these before they are guided to HslV for hydrolysis. This Leptospira interrogans serogroup Icterohaemorrhagiae serovar copenhageni (strain Fiocruz L1-130) protein is ATP-dependent protease ATPase subunit HslU.